A 171-amino-acid chain; its full sequence is Peptide deformylase 1 (171 aa).

Cys99 and His141 together coordinate Fe cation. Glu142 is a catalytic residue. His145 contacts Fe cation.

Belongs to the polypeptide deformylase family. Fe(2+) serves as cofactor.

It carries out the reaction N-terminal N-formyl-L-methionyl-[peptide] + H2O = N-terminal L-methionyl-[peptide] + formate. Its function is as follows. Removes the formyl group from the N-terminal Met of newly synthesized proteins. Requires at least a dipeptide for an efficient rate of reaction. N-terminal L-methionine is a prerequisite for activity but the enzyme has broad specificity at other positions. This is Peptide deformylase 1 from Xanthomonas campestris pv. campestris (strain ATCC 33913 / DSM 3586 / NCPPB 528 / LMG 568 / P 25).